We begin with the raw amino-acid sequence, 92 residues long: C-C motif chemokine 3 (92 aa).

The N-terminal stretch at methionine 1–alanine 23 is a signal peptide. Disulfide bonds link cysteine 33/cysteine 57 and cysteine 34/cysteine 73.

The protein belongs to the intercrine beta (chemokine CC) family. Self-associates. Also heterodimer of MIP-1-alpha(4-69) and MIP-1-beta(3-69). Interacts with CCR1. In terms of processing, N-terminal processed form LD78-alpha(4-69) is produced by proteolytic cleavage after secretion from HTLV1-transformed T-cells.

The protein resides in the secreted. Functionally, monokine with inflammatory and chemokinetic properties. Binds to CCR1, CCR4 and CCR5. One of the major HIV-suppressive factors produced by CD8+ T-cells. Recombinant MIP-1-alpha induces a dose-dependent inhibition of different strains of HIV-1, HIV-2, and simian immunodeficiency virus (SIV). In Homo sapiens (Human), this protein is C-C motif chemokine 3 (CCL3).